We begin with the raw amino-acid sequence, 320 residues long: Aspartate carbamoyltransferase catalytic subunit (320 aa).

Residues Arg-53 and Thr-54 each coordinate carbamoyl phosphate. L-aspartate is bound at residue Lys-82. Positions 103, 131, and 134 each coordinate carbamoyl phosphate. 2 residues coordinate L-aspartate: Arg-164 and Arg-227. Residues Leu-266 and Pro-267 each coordinate carbamoyl phosphate.

Belongs to the aspartate/ornithine carbamoyltransferase superfamily. ATCase family. In terms of assembly, heterododecamer (2C3:3R2) of six catalytic PyrB chains organized as two trimers (C3), and six regulatory PyrI chains organized as three dimers (R2).

The enzyme catalyses carbamoyl phosphate + L-aspartate = N-carbamoyl-L-aspartate + phosphate + H(+). It participates in pyrimidine metabolism; UMP biosynthesis via de novo pathway; (S)-dihydroorotate from bicarbonate: step 2/3. Its function is as follows. Catalyzes the condensation of carbamoyl phosphate and aspartate to form carbamoyl aspartate and inorganic phosphate, the committed step in the de novo pyrimidine nucleotide biosynthesis pathway. The polypeptide is Aspartate carbamoyltransferase catalytic subunit (Bifidobacterium adolescentis (strain ATCC 15703 / DSM 20083 / NCTC 11814 / E194a)).